A 390-amino-acid chain; its full sequence is Glutamyl-tRNA reductase (390 aa).

Substrate is bound by residues 46–49 (TCNR), S96, 101–103 (EAQ), and Q107. C47 acts as the Nucleophile in catalysis. 176-181 (GAGEMA) provides a ligand contact to NADP(+).

The protein belongs to the glutamyl-tRNA reductase family. Homodimer.

The catalysed reaction is (S)-4-amino-5-oxopentanoate + tRNA(Glu) + NADP(+) = L-glutamyl-tRNA(Glu) + NADPH + H(+). Its pathway is porphyrin-containing compound metabolism; protoporphyrin-IX biosynthesis; 5-aminolevulinate from L-glutamyl-tRNA(Glu): step 1/2. Its function is as follows. Catalyzes the NADPH-dependent reduction of glutamyl-tRNA(Glu) to glutamate 1-semialdehyde (GSA). The protein is Glutamyl-tRNA reductase of Thermus thermophilus (strain ATCC 27634 / DSM 579 / HB8).